The primary structure comprises 193 residues: Protein TEX261 (193 aa).

Helical transmembrane passes span 1 to 21, 39 to 59, 67 to 87, 94 to 114, and 122 to 142; these read MVGV…PPPA, SRII…LYVF, IGVG…FPFI, FILS…FFAE, and VLAY…VSLS.

The protein belongs to the SVP26 family.

The protein localises to the membrane. The polypeptide is Protein TEX261 (TEX261) (Bos taurus (Bovine)).